We begin with the raw amino-acid sequence, 514 residues long: CBL-interacting protein kinase 25 (514 aa).

A Protein kinase domain is found at 21–281; sequence YEFGPLVGEG…IPEIMEMRWF (261 aa). ATP contacts are provided by residues 27–35 and lysine 50; that span reads VGEGNFAKV. Aspartate 149 serves as the catalytic Proton acceptor. An activation loop region spans residues 167-196; that stretch reads DFGLSALADMERREAHLQTVCGTPLFLAPE. Positions 303-340 are disordered; that stretch reads GLDGEPELYDSDTDTIESSSSSESPTPVAGTPRGMHTS. A compositionally biased stretch (acidic residues) spans 304–317; that stretch reads LDGEPELYDSDTDT. Residues 318 to 329 show a composition bias toward low complexity; the sequence is IESSSSSESPTP. Residues 323 to 395 enclose the NAF domain; sequence SSESPTPVAG…PSFDLSGLFE (73 aa). The tract at residues 398–427 is PPI; it reads GERMRFVSGAPVADIIAKLQEIAGMVSFTA.

Belongs to the protein kinase superfamily. CAMK Ser/Thr protein kinase family. SNF1 subfamily. Mn(2+) serves as cofactor.

The enzyme catalyses L-seryl-[protein] + ATP = O-phospho-L-seryl-[protein] + ADP + H(+). It carries out the reaction L-threonyl-[protein] + ATP = O-phospho-L-threonyl-[protein] + ADP + H(+). In terms of biological role, CIPK serine-threonine protein kinases interact with CBL proteins. Binding of a CBL protein to the regulatory NAF domain of CIPK protein lead to the activation of the kinase in a calcium-dependent manner. The sequence is that of CBL-interacting protein kinase 25 (CIPK25) from Oryza sativa subsp. japonica (Rice).